Here is a 599-residue protein sequence, read N- to C-terminus: Elongation factor 4 (599 aa).

Positions 2 to 184 (KNIRNFSIIA…RLVRDIPPPQ (183 aa)) constitute a tr-type G domain. GTP contacts are provided by residues 14–19 (DHGKST) and 131–134 (NKID).

This sequence belongs to the TRAFAC class translation factor GTPase superfamily. Classic translation factor GTPase family. LepA subfamily.

The protein localises to the cell inner membrane. The enzyme catalyses GTP + H2O = GDP + phosphate + H(+). In terms of biological role, required for accurate and efficient protein synthesis under certain stress conditions. May act as a fidelity factor of the translation reaction, by catalyzing a one-codon backward translocation of tRNAs on improperly translocated ribosomes. Back-translocation proceeds from a post-translocation (POST) complex to a pre-translocation (PRE) complex, thus giving elongation factor G a second chance to translocate the tRNAs correctly. Binds to ribosomes in a GTP-dependent manner. This Salmonella arizonae (strain ATCC BAA-731 / CDC346-86 / RSK2980) protein is Elongation factor 4.